Reading from the N-terminus, the 314-residue chain is Carbamate kinase (314 aa).

This sequence belongs to the carbamate kinase family. In terms of assembly, homodimer.

It is found in the cytoplasm. It carries out the reaction hydrogencarbonate + NH4(+) + ATP = carbamoyl phosphate + ADP + H2O + H(+). It functions in the pathway metabolic intermediate metabolism; carbamoyl phosphate degradation; CO(2) and NH(3) from carbamoyl phosphate: step 1/1. This is Carbamate kinase (arcC) from Clostridium perfringens (strain 13 / Type A).